The primary structure comprises 428 residues: Serine--tRNA ligase (428 aa).

An L-serine-binding site is contributed by 231-233 (TAE). 262-264 (RSE) is a binding site for ATP. Residue E285 participates in L-serine binding. Position 349 to 352 (349 to 352 (EISS)) interacts with ATP. S385 contacts L-serine.

It belongs to the class-II aminoacyl-tRNA synthetase family. Type-1 seryl-tRNA synthetase subfamily. In terms of assembly, homodimer. The tRNA molecule binds across the dimer.

Its subcellular location is the cytoplasm. The enzyme catalyses tRNA(Ser) + L-serine + ATP = L-seryl-tRNA(Ser) + AMP + diphosphate + H(+). It catalyses the reaction tRNA(Sec) + L-serine + ATP = L-seryl-tRNA(Sec) + AMP + diphosphate + H(+). It functions in the pathway aminoacyl-tRNA biosynthesis; selenocysteinyl-tRNA(Sec) biosynthesis; L-seryl-tRNA(Sec) from L-serine and tRNA(Sec): step 1/1. Its function is as follows. Catalyzes the attachment of serine to tRNA(Ser). Is also able to aminoacylate tRNA(Sec) with serine, to form the misacylated tRNA L-seryl-tRNA(Sec), which will be further converted into selenocysteinyl-tRNA(Sec). This is Serine--tRNA ligase from Staphylococcus aureus (strain USA300).